Reading from the N-terminus, the 142-residue chain is Hemoglobin subunit alpha-A (142 aa).

The Globin domain occupies 2–142; the sequence is VLSPTDKSIV…VSTVLTSKYR (141 aa). His59 lines the O2 pocket. His88 contacts heme b.

Belongs to the globin family. Heterotetramer of two alpha chains and two beta chains. Red blood cells.

Involved in oxygen transport from the lung to the various peripheral tissues. This chain is Hemoglobin subunit alpha-A (HBAA), found in Otolemur crassicaudatus (Brown greater galago).